The chain runs to 288 residues: Bifunctional protein FolD (288 aa).

NADP(+)-binding positions include 166-168 and Ile232; that span reads GAS.

Belongs to the tetrahydrofolate dehydrogenase/cyclohydrolase family. In terms of assembly, homodimer.

The enzyme catalyses (6R)-5,10-methylene-5,6,7,8-tetrahydrofolate + NADP(+) = (6R)-5,10-methenyltetrahydrofolate + NADPH. It catalyses the reaction (6R)-5,10-methenyltetrahydrofolate + H2O = (6R)-10-formyltetrahydrofolate + H(+). It participates in one-carbon metabolism; tetrahydrofolate interconversion. Catalyzes the oxidation of 5,10-methylenetetrahydrofolate to 5,10-methenyltetrahydrofolate and then the hydrolysis of 5,10-methenyltetrahydrofolate to 10-formyltetrahydrofolate. This Shigella dysenteriae serotype 1 (strain Sd197) protein is Bifunctional protein FolD.